Consider the following 301-residue polypeptide: Probable alpha-L-glutamate ligase (301 aa).

In terms of domain architecture, ATP-grasp spans leucine 104–glutamate 287. Residues lysine 141, glutamate 178–tyrosine 179, aspartate 187, and arginine 211–asparagine 213 each bind ATP. Aspartate 248, glutamate 260, and asparagine 262 together coordinate Mg(2+). Mn(2+) contacts are provided by aspartate 248, glutamate 260, and asparagine 262.

This sequence belongs to the RimK family. Requires Mg(2+) as cofactor. Mn(2+) is required as a cofactor.

This chain is Probable alpha-L-glutamate ligase, found in Pseudomonas fluorescens (strain SBW25).